We begin with the raw amino-acid sequence, 180 residues long: Nucleoside triphosphate/diphosphate phosphatase (180 aa).

Arg-26 functions as the Proton donor in the catalytic mechanism. Mg(2+) is bound by residues Asn-90, Asp-106, Asp-108, Asp-110, Asp-123, and Glu-126.

It belongs to the Ntdp family. Mg(2+) is required as a cofactor.

It catalyses the reaction a ribonucleoside 5'-triphosphate + H2O = a ribonucleoside 5'-diphosphate + phosphate + H(+). It carries out the reaction a ribonucleoside 5'-diphosphate + H2O = a ribonucleoside 5'-phosphate + phosphate + H(+). Functionally, has nucleoside phosphatase activity towards nucleoside triphosphates and nucleoside diphosphates. This is Nucleoside triphosphate/diphosphate phosphatase from Staphylococcus saprophyticus subsp. saprophyticus (strain ATCC 15305 / DSM 20229 / NCIMB 8711 / NCTC 7292 / S-41).